The chain runs to 221 residues: Iron-sulfur cluster repair protein YtfE (221 aa).

Belongs to the RIC family. YtfE subfamily. In terms of assembly, homodimer.

It localises to the cytoplasm. Functionally, di-iron-containing protein involved in the repair of iron-sulfur clusters damaged by oxidative and nitrosative stress conditions. This chain is Iron-sulfur cluster repair protein YtfE, found in Pectobacterium atrosepticum (strain SCRI 1043 / ATCC BAA-672) (Erwinia carotovora subsp. atroseptica).